A 217-amino-acid polypeptide reads, in one-letter code: Protein-L-isoaspartate O-methyltransferase (217 aa).

Residue serine 64 is part of the active site.

This sequence belongs to the methyltransferase superfamily. L-isoaspartyl/D-aspartyl protein methyltransferase family.

The protein resides in the cytoplasm. The catalysed reaction is [protein]-L-isoaspartate + S-adenosyl-L-methionine = [protein]-L-isoaspartate alpha-methyl ester + S-adenosyl-L-homocysteine. Its function is as follows. Catalyzes the methyl esterification of L-isoaspartyl residues in peptides and proteins that result from spontaneous decomposition of normal L-aspartyl and L-asparaginyl residues. It plays a role in the repair and/or degradation of damaged proteins. The polypeptide is Protein-L-isoaspartate O-methyltransferase (Nitrobacter winogradskyi (strain ATCC 25391 / DSM 10237 / CIP 104748 / NCIMB 11846 / Nb-255)).